Consider the following 193-residue polypeptide: UPF0397 protein PA0141 (193 aa).

The next 5 membrane-spanning stretches (helical) occupy residues 11 to 31 (VTIA…SIPI), 43 to 63 (FLVF…GLLG), 69 to 89 (FFLF…LGFL), 109 to 129 (ILFF…LIAP), and 147 to 167 (GFLV…FLMS).

This sequence belongs to the UPF0397 family.

It is found in the cell membrane. The sequence is that of UPF0397 protein PA0141 from Phytoplasma australiense.